Consider the following 250-residue polypeptide: Eukaryotic translation initiation factor 3 subunit K (250 aa).

A PCI domain is found at Phe46–Lys229.

The protein belongs to the eIF-3 subunit K family. As to quaternary structure, component of the eukaryotic translation initiation factor 3 (eIF-3) complex.

It localises to the cytoplasm. Its function is as follows. Component of the eukaryotic translation initiation factor 3 (eIF-3) complex, which is involved in protein synthesis of a specialized repertoire of mRNAs and, together with other initiation factors, stimulates binding of mRNA and methionyl-tRNAi to the 40S ribosome. The eIF-3 complex specifically targets and initiates translation of a subset of mRNAs involved in cell proliferation. This Emericella nidulans (strain FGSC A4 / ATCC 38163 / CBS 112.46 / NRRL 194 / M139) (Aspergillus nidulans) protein is Eukaryotic translation initiation factor 3 subunit K.